We begin with the raw amino-acid sequence, 226 residues long: MPGQPTRDQVAALVDHTLLKPEATAADVVALVAEAADLGVYAVCVSPSMVPAAVSAGGVRVATVAGFPSGKHASAIKAHEAALAVACGAVEVDMVIDVGAALAGHLDAVRSDIEAVRCATSGAVLKVIVESAALLGLADESTLIGVCRVAEDAGADFVKTSTGFHPAGGASTRAVEVMASAVGGRLGVKASGGIRTATDAVAMLSAGATRLGLSGTRAVLEGLGQN.

Catalysis depends on aspartate 93, which acts as the Proton donor/acceptor. Catalysis depends on lysine 159, which acts as the Schiff-base intermediate with acetaldehyde. Residue lysine 189 is the Proton donor/acceptor of the active site.

The protein belongs to the DeoC/FbaB aldolase family. DeoC type 1 subfamily.

Its subcellular location is the cytoplasm. The catalysed reaction is 2-deoxy-D-ribose 5-phosphate = D-glyceraldehyde 3-phosphate + acetaldehyde. Its pathway is carbohydrate degradation; 2-deoxy-D-ribose 1-phosphate degradation; D-glyceraldehyde 3-phosphate and acetaldehyde from 2-deoxy-alpha-D-ribose 1-phosphate: step 2/2. Functionally, catalyzes a reversible aldol reaction between acetaldehyde and D-glyceraldehyde 3-phosphate to generate 2-deoxy-D-ribose 5-phosphate. This chain is Deoxyribose-phosphate aldolase, found in Mycobacterium marinum (strain ATCC BAA-535 / M).